Reading from the N-terminus, the 187-residue chain is Resolvase OPG149 (187 aa).

It belongs to the RuvC family. Poxviruses-type subfamily. Mg(2+) is required as a cofactor.

Plays a role in DNA replication by cleaving viral DNA concatamers to yield unit-length viral genomes. The concatamer junctions contain inverted repeat sequences that can be extruded as cruciforms, yielding Holliday junctions that A22 protein cleaves. This Variola virus (isolate Human/India/Ind3/1967) (VARV) protein is Resolvase OPG149 (OPG149).